Reading from the N-terminus, the 473-residue chain is Glutamine synthetase (473 aa).

A GS beta-grasp domain is found at 18–102; sequence NNIKWVDLQF…VLTKVFWGGG (85 aa). The region spanning 110 to 473 is the GS catalytic domain; it reads PRGIAEEAEK…PMEIYQYLDS (364 aa). Mg(2+) contacts are provided by Glu133 and Glu135. Glu207 lines the ATP pocket. 2 residues coordinate Mg(2+): Glu212 and Glu220. L-glutamate-binding positions include 264 to 265 and Gly265; that span reads NG. His269 is a binding site for Mg(2+). Residues 271–273 and Ser273 contribute to the ATP site; that span reads HFS. L-glutamate-binding residues include Arg324, Glu330, and Arg342. ATP is bound by residues Arg342, Arg347, and Lys357. Glu362 provides a ligand contact to Mg(2+). Arg364 contacts L-glutamate.

This sequence belongs to the glutamine synthetase family. In terms of assembly, oligomer of 12 subunits arranged in the form of two hexagons. Mg(2+) is required as a cofactor. The cofactor is Mn(2+).

The protein localises to the cytoplasm. It carries out the reaction L-glutamate + NH4(+) + ATP = L-glutamine + ADP + phosphate + H(+). Its activity is regulated as follows. Strongly inhibited by glycine and L-alanine. AMP at 10 mM displays a very weak inhibitory effect. The activity of this enzyme is not controlled by adenylation. Probably involved in nitrogen metabolism via ammonium assimilation. Catalyzes the ATP-dependent biosynthesis of glutamine from glutamate and ammonia. This is Glutamine synthetase from Sulfolobus acidocaldarius (strain ATCC 33909 / DSM 639 / JCM 8929 / NBRC 15157 / NCIMB 11770).